Here is a 140-residue protein sequence, read N- to C-terminus: uncharacterized protein (140 aa).

Helical transmembrane passes span 33–53 and 59–79; these read LLYVFLFIIFANCVVDVKYYF and SLLFVYFFLTLIILLVSFMGF. Residues 89 to 104 are compositionally biased toward basic and acidic residues; that stretch reads EAEPDYRKKQESKNQD. The tract at residues 89-140 is disordered; that stretch reads EAEPDYRKKQESKNQDFLKSQSNEPLEYASSSAVELEKEKNTREGLTILESS. Residues 105 to 121 are compositionally biased toward polar residues; it reads FLKSQSNEPLEYASSSA.

The protein resides in the membrane. This is an uncharacterized protein from Schizosaccharomyces pombe (strain 972 / ATCC 24843) (Fission yeast).